A 176-amino-acid polypeptide reads, in one-letter code: Adenine phosphoribosyltransferase (176 aa).

Belongs to the purine/pyrimidine phosphoribosyltransferase family. As to quaternary structure, homodimer.

It is found in the cytoplasm. The catalysed reaction is AMP + diphosphate = 5-phospho-alpha-D-ribose 1-diphosphate + adenine. The protein operates within purine metabolism; AMP biosynthesis via salvage pathway; AMP from adenine: step 1/1. In terms of biological role, catalyzes a salvage reaction resulting in the formation of AMP, that is energically less costly than de novo synthesis. This is Adenine phosphoribosyltransferase from Roseobacter denitrificans (strain ATCC 33942 / OCh 114) (Erythrobacter sp. (strain OCh 114)).